The sequence spans 294 residues: Thymidylate synthase (294 aa).

Residues arginine 30 and 156 to 157 (RR) contribute to the dUMP site. The Nucleophile role is filled by cysteine 176. Residues 196-199 (RSGD), asparagine 207, and 237-239 (HVY) contribute to the dUMP site. Residue aspartate 199 coordinates (6R)-5,10-methylene-5,6,7,8-tetrahydrofolate. Residue alanine 293 participates in (6R)-5,10-methylene-5,6,7,8-tetrahydrofolate binding.

It belongs to the thymidylate synthase family. In terms of assembly, homodimer.

The catalysed reaction is dUMP + (6R)-5,10-methylene-5,6,7,8-tetrahydrofolate = 7,8-dihydrofolate + dTMP. It participates in pyrimidine metabolism; dTTP biosynthesis. This Ascaris suum (Pig roundworm) protein is Thymidylate synthase.